The primary structure comprises 544 residues: Putative ligase Rv1013 (544 aa).

An Isoglutamyl lysine isopeptide (Lys-Gln) (interchain with Q-Cter in protein Pup) cross-link involves residue K528.

Belongs to the ATP-dependent AMP-binding enzyme family. In terms of processing, pupylated at Lys-528 by the prokaryotic ubiquitin-like protein Pup, which probably leads to its degradation by the proteasome.

The polypeptide is Putative ligase Rv1013 (pks16) (Mycobacterium tuberculosis (strain ATCC 25618 / H37Rv)).